The following is a 149-amino-acid chain: Large ribosomal subunit protein uL15 (149 aa).

Residues 1–11 are compositionally biased toward basic and acidic residues; that stretch reads MSDPIKLHDLR. A disordered region spans residues 1 to 44; the sequence is MSDPIKLHDLRPAPGAKKAKTRVGRGEASKGKTAGRGTKGTKAR.

It belongs to the universal ribosomal protein uL15 family. In terms of assembly, part of the 50S ribosomal subunit.

Its function is as follows. Binds to the 23S rRNA. This chain is Large ribosomal subunit protein uL15, found in Corynebacterium jeikeium (strain K411).